The following is a 257-amino-acid chain: Thiazole synthase (257 aa).

The active-site Schiff-base intermediate with DXP is K96. Residues G157, 184–185 (AG), and 206–207 (NT) each bind 1-deoxy-D-xylulose 5-phosphate.

This sequence belongs to the ThiG family. In terms of assembly, homotetramer. Forms heterodimers with either ThiH or ThiS.

Its subcellular location is the cytoplasm. It carries out the reaction [ThiS sulfur-carrier protein]-C-terminal-Gly-aminoethanethioate + 2-iminoacetate + 1-deoxy-D-xylulose 5-phosphate = [ThiS sulfur-carrier protein]-C-terminal Gly-Gly + 2-[(2R,5Z)-2-carboxy-4-methylthiazol-5(2H)-ylidene]ethyl phosphate + 2 H2O + H(+). It participates in cofactor biosynthesis; thiamine diphosphate biosynthesis. Catalyzes the rearrangement of 1-deoxy-D-xylulose 5-phosphate (DXP) to produce the thiazole phosphate moiety of thiamine. Sulfur is provided by the thiocarboxylate moiety of the carrier protein ThiS. In vitro, sulfur can be provided by H(2)S. The protein is Thiazole synthase of Rhizobium meliloti (strain 1021) (Ensifer meliloti).